Reading from the N-terminus, the 443-residue chain is ATP-dependent protease ATPase subunit HslU (443 aa).

Residues Ile20, 62–67 (GVGKTE), Asp255, Glu321, and Arg393 contribute to the ATP site.

This sequence belongs to the ClpX chaperone family. HslU subfamily. As to quaternary structure, a double ring-shaped homohexamer of HslV is capped on each side by a ring-shaped HslU homohexamer. The assembly of the HslU/HslV complex is dependent on binding of ATP.

The protein localises to the cytoplasm. Its function is as follows. ATPase subunit of a proteasome-like degradation complex; this subunit has chaperone activity. The binding of ATP and its subsequent hydrolysis by HslU are essential for unfolding of protein substrates subsequently hydrolyzed by HslV. HslU recognizes the N-terminal part of its protein substrates and unfolds these before they are guided to HslV for hydrolysis. This is ATP-dependent protease ATPase subunit HslU from Helicobacter pylori (strain J99 / ATCC 700824) (Campylobacter pylori J99).